The chain runs to 255 residues: MYSINAHAKVNIFLKITGHENGYHTLLSRFMRVDDLYDTITLVPGTFDSFTLEGCKGVPLHFNTIYKAYEALLEPFPKLEDFFKSHKVVVEKSIPSQAGLGGGSSDAGAFMRLINSLSQNPLSTDALAKLGSSIGADVPFFVYNYPSANVRGFGEIVEPFRETPLKLELFTPDIGCDTAKVYQTYHKYLLRTLDPKSFFGWENMDSGTLLQLIADPVALNDLYPAALSTCPALEKLDTKGWFFSGSGSTFFRVKD.

Lys-9 is a catalytic residue. 95 to 105 (PSQAGLGGGSS) is an ATP binding site. Asp-137 is an active-site residue.

The protein belongs to the GHMP kinase family. IspE subfamily.

It catalyses the reaction 4-CDP-2-C-methyl-D-erythritol + ATP = 4-CDP-2-C-methyl-D-erythritol 2-phosphate + ADP + H(+). Its pathway is isoprenoid biosynthesis; isopentenyl diphosphate biosynthesis via DXP pathway; isopentenyl diphosphate from 1-deoxy-D-xylulose 5-phosphate: step 3/6. In terms of biological role, catalyzes the phosphorylation of the position 2 hydroxy group of 4-diphosphocytidyl-2C-methyl-D-erythritol. In Sulfurovum sp. (strain NBC37-1), this protein is 4-diphosphocytidyl-2-C-methyl-D-erythritol kinase.